We begin with the raw amino-acid sequence, 482 residues long: MAAVRMLRTWSRNAGKLICVRYFQTCGNVHVLKPNYVCFFGYPSFKYSHPHHFLKTTAALRGQVVQFKLSDIGEGIREVTVKEWYVKEGDTVSQFDSICEVQSDKASVTITSRYDGVIKKLYYNLDDIAYVGKPLVDIETEALKDSEEDVVETPAVSHDEHTHQEIKGRKTLATPAVRRLAMENNIKLSEVVGSGKDGRILKEDILNYLEKQTGAILPPSPKVEIMPPPPKPKDMTVPILVSKPPVFTGKDKTEPIKGFQKAMVKTMSAALKIPHFGYCDEIDLTELVKLREELKPIAFARGIKLSFMPFFLKAASLGLLQFPILNASVDENCQNITYKASHNIGIAMDTEQGLIVPNVKNVQICSIFDIATELNRLQKLGSVSQLSTTDLTGGTFTLSNIGSIGGTFAKPVIMPPEVAIGALGSIKAIPRFNQKGEVYKAQIMNVSWSADHRVIDGATMSRFSNLWKSYLENPAFMLLDLK.

Residues 1-61 (MAAVRMLRTW…HFLKTTAALR (61 aa)) constitute a mitochondrion transit peptide. The region spanning 64–139 (VVQFKLSDIG…YVGKPLVDIE (76 aa)) is the Lipoyl-binding domain. An N6-lipoyllysine modification is found at Lys-105. An N6-succinyllysine modification is found at Lys-133. Residues 145-160 (DSEEDVVETPAVSHDE) are critical for association with PPM1K. The interval 147 to 168 (EEDVVETPAVSHDEHTHQEIKG) is disordered. Positions 157–168 (SHDEHTHQEIKG) are enriched in basic and acidic residues. The Peripheral subunit-binding (PSBD) domain maps to 172–209 (LATPAVRRLAMENNIKLSEVVGSGKDGRILKEDILNYL). Lys-196 is modified (N6-acetyllysine; alternate). Lys-196 carries the N6-succinyllysine; alternate modification. Lys-202 carries the N6-acetyllysine modification. A Phosphoserine modification is found at Ser-220. 2 positions are modified to N6-acetyllysine: Lys-243 and Lys-250. Lys-261 is modified (N6-succinyllysine). Lys-289 carries the post-translational modification N6-acetyllysine; alternate. Position 289 is an N6-succinyllysine; alternate (Lys-289). CoA is bound at residue Arg-291. N6-acetyllysine is present on residues Lys-295 and Lys-304. Residues Ser-306, Asp-349, Gln-378, Ser-399, Asn-400, Ser-403, Gly-424, and Ile-426 each coordinate CoA. Lys-435 is modified (N6-acetyllysine). Lys-440 is modified (N6-acetyllysine; alternate). The residue at position 440 (Lys-440) is an N6-succinyllysine; alternate. Active-site residues include His-452 and Asp-456.

Belongs to the 2-oxoacid dehydrogenase family. As to quaternary structure, forms a 24-polypeptide structural core with octahedral symmetry that represents the E2 component of the branched-chain alpha-ketoacid dehydrogenase (BCKDH) complex. The BCKDH complex is composed of three major building blocks E1, E2 and E3. It is organized around E2, a 24-meric cubic core composed of DBT, to which are associated 6 to 12 copies of E1, and approximately 6 copies of the dehydrogenase E3, a DLD dimer. Interacts with PPM1K with a 24:1 stoichiometry; the N-terminal region (residues 49-61) of PPM1K and C-terminal linker of the lipoyl domain of DBT/E2 (residues 145-160) are critical for this interaction whereas the lipoyl prosthetic group is dispensable. This interaction requires colocalization in mitochondria. PPM1K competes with BCKDK for binding to DBT; this interaction is modulated by branched-chain alpha-keto acids (BCKAs). At steady state, BCKDH holoenzyme preferentially binds BCKDK and BCKDHA is phosphorylated. In response to high levels of BCKAs, BCKDK is replaced by PPM1K leading to BCKDHA dephosphorylation. It depends on (R)-lipoate as a cofactor.

The protein resides in the mitochondrion matrix. It carries out the reaction N(6)-[(R)-dihydrolipoyl]-L-lysyl-[protein] + 2-methylpropanoyl-CoA = N(6)-[(R)-S(8)-2-methylpropanoyldihydrolipoyl]-L-lysyl-[protein] + CoA. The branched-chain alpha-keto dehydrogenase complex catalyzes the overall conversion of alpha-keto acids to acyl-CoA and CO(2). It contains multiple copies of three enzymatic components: branched-chain alpha-keto acid decarboxylase (E1), lipoamide acyltransferase (E2) and lipoamide dehydrogenase (E3). Within this complex, the catalytic function of this enzyme is to accept, and to transfer to coenzyme A, acyl groups that are generated by the branched-chain alpha-keto acid decarboxylase component. The polypeptide is Lipoamide acyltransferase component of branched-chain alpha-keto acid dehydrogenase complex, mitochondrial (Homo sapiens (Human)).